The sequence spans 355 residues: UDP-N-acetylglucosamine--N-acetylmuramyl-(pentapeptide) pyrophosphoryl-undecaprenol N-acetylglucosamine transferase (355 aa).

UDP-N-acetyl-alpha-D-glucosamine-binding positions include 14 to 16 (TGG), asparagine 126, arginine 162, serine 190, isoleucine 243, 262 to 267 (ALTVSE), and glutamine 287.

It belongs to the glycosyltransferase 28 family. MurG subfamily.

The protein localises to the cell inner membrane. The catalysed reaction is di-trans,octa-cis-undecaprenyl diphospho-N-acetyl-alpha-D-muramoyl-L-alanyl-D-glutamyl-meso-2,6-diaminopimeloyl-D-alanyl-D-alanine + UDP-N-acetyl-alpha-D-glucosamine = di-trans,octa-cis-undecaprenyl diphospho-[N-acetyl-alpha-D-glucosaminyl-(1-&gt;4)]-N-acetyl-alpha-D-muramoyl-L-alanyl-D-glutamyl-meso-2,6-diaminopimeloyl-D-alanyl-D-alanine + UDP + H(+). It functions in the pathway cell wall biogenesis; peptidoglycan biosynthesis. Functionally, cell wall formation. Catalyzes the transfer of a GlcNAc subunit on undecaprenyl-pyrophosphoryl-MurNAc-pentapeptide (lipid intermediate I) to form undecaprenyl-pyrophosphoryl-MurNAc-(pentapeptide)GlcNAc (lipid intermediate II). The chain is UDP-N-acetylglucosamine--N-acetylmuramyl-(pentapeptide) pyrophosphoryl-undecaprenol N-acetylglucosamine transferase from Vibrio campbellii (strain ATCC BAA-1116).